The sequence spans 378 residues: Ribosomal RNA large subunit methyltransferase G (378 aa).

It belongs to the methyltransferase superfamily. RlmG family.

The protein localises to the cytoplasm. It carries out the reaction guanosine(1835) in 23S rRNA + S-adenosyl-L-methionine = N(2)-methylguanosine(1835) in 23S rRNA + S-adenosyl-L-homocysteine + H(+). In terms of biological role, specifically methylates the guanine in position 1835 (m2G1835) of 23S rRNA. The chain is Ribosomal RNA large subunit methyltransferase G from Escherichia coli O157:H7.